A 540-amino-acid chain; its full sequence is Chaperonin GroEL (540 aa).

ATP contacts are provided by residues 30-33 (TLGP), Lys-51, 87-91 (DGTTT), Gly-415, 479-481 (NAA), and Asp-495.

The protein belongs to the chaperonin (HSP60) family. As to quaternary structure, forms a cylinder of 14 subunits composed of two heptameric rings stacked back-to-back. Interacts with the co-chaperonin GroES.

Its subcellular location is the cytoplasm. It catalyses the reaction ATP + H2O + a folded polypeptide = ADP + phosphate + an unfolded polypeptide.. Functionally, together with its co-chaperonin GroES, plays an essential role in assisting protein folding. The GroEL-GroES system forms a nano-cage that allows encapsulation of the non-native substrate proteins and provides a physical environment optimized to promote and accelerate protein folding. The protein is Chaperonin GroEL of Pectobacterium carotovorum subsp. carotovorum (Erwinia carotovora subsp. carotovora).